We begin with the raw amino-acid sequence, 362 residues long: Holliday junction branch migration complex subunit RuvB (362 aa).

Residues 4 to 186 (PDRPQRLVEQ…FGIPLRMQFY (183 aa)) are large ATPase domain (RuvB-L). ATP is bound by residues isoleucine 25, arginine 26, glycine 67, lysine 70, threonine 71, threonine 72, 133–135 (EDF), arginine 176, tyrosine 186, and arginine 223. Threonine 71 contacts Mg(2+). Positions 187 to 257 (EPEELQLIVA…AAGGALTRLE (71 aa)) are small ATPAse domain (RuvB-S). A head domain (RuvB-H) region spans residues 260-362 (RLGFDAMDRR…GTPEGEGEDV (103 aa)). Residues arginine 296, arginine 315, and arginine 320 each contribute to the DNA site.

It belongs to the RuvB family. As to quaternary structure, homohexamer. Forms an RuvA(8)-RuvB(12)-Holliday junction (HJ) complex. HJ DNA is sandwiched between 2 RuvA tetramers; dsDNA enters through RuvA and exits via RuvB. An RuvB hexamer assembles on each DNA strand where it exits the tetramer. Each RuvB hexamer is contacted by two RuvA subunits (via domain III) on 2 adjacent RuvB subunits; this complex drives branch migration. In the full resolvosome a probable DNA-RuvA(4)-RuvB(12)-RuvC(2) complex forms which resolves the HJ.

It localises to the cytoplasm. The catalysed reaction is ATP + H2O = ADP + phosphate + H(+). In terms of biological role, the RuvA-RuvB-RuvC complex processes Holliday junction (HJ) DNA during genetic recombination and DNA repair, while the RuvA-RuvB complex plays an important role in the rescue of blocked DNA replication forks via replication fork reversal (RFR). RuvA specifically binds to HJ cruciform DNA, conferring on it an open structure. The RuvB hexamer acts as an ATP-dependent pump, pulling dsDNA into and through the RuvAB complex. RuvB forms 2 homohexamers on either side of HJ DNA bound by 1 or 2 RuvA tetramers; 4 subunits per hexamer contact DNA at a time. Coordinated motions by a converter formed by DNA-disengaged RuvB subunits stimulates ATP hydrolysis and nucleotide exchange. Immobilization of the converter enables RuvB to convert the ATP-contained energy into a lever motion, pulling 2 nucleotides of DNA out of the RuvA tetramer per ATP hydrolyzed, thus driving DNA branch migration. The RuvB motors rotate together with the DNA substrate, which together with the progressing nucleotide cycle form the mechanistic basis for DNA recombination by continuous HJ branch migration. Branch migration allows RuvC to scan DNA until it finds its consensus sequence, where it cleaves and resolves cruciform DNA. The sequence is that of Holliday junction branch migration complex subunit RuvB from Rhodospirillum centenum (strain ATCC 51521 / SW).